The sequence spans 201 residues: Protease (201 aa).

Residues His-55, Asp-72, and Cys-122 contribute to the active site.

It belongs to the peptidase C5 family. As to quaternary structure, interacts with protease cofactor pVI-C; this interaction is necessary for protease activation.

It localises to the virion. Its subcellular location is the host nucleus. The enzyme catalyses Cleaves proteins of the adenovirus and its host cell at two consensus sites: -Yaa-Xaa-Gly-Gly-|-Xaa- and -Yaa-Xaa-Gly-Xaa-|-Gly- (in which Yaa is Met, Ile or Leu, and Xaa is any amino acid).. With respect to regulation, requires DNA and protease cofactor for maximal activation. Inside nascent virions, becomes partially activated by binding to the viral DNA, allowing it to cleave the cofactor that binds to the protease and fully activates it. Actin, like the viral protease cofactor, seems to act as a cofactor in the cleavage of cytokeratin 18 and of actin itself. Functionally, cleaves viral precursor proteins (pTP, pIIIa, pVI, pVII, pVIII, and pX) inside newly assembled particles giving rise to mature virions. Protease complexed to its cofactor slides along the viral DNA to specifically locate and cleave the viral precursors. Mature virions have a weakened organization compared to the unmature virions, thereby facilitating subsequent uncoating. Without maturation, the particle lacks infectivity and is unable to uncoat. Late in adenovirus infection, in the cytoplasm, may participate in the cytoskeleton destruction. Cleaves host cell cytoskeletal keratins K7 and K18. The sequence is that of Protease from Pantherophis guttatus (Corn snake).